Reading from the N-terminus, the 54-residue chain is Large ribosomal subunit protein bL32 (54 aa).

Residues 1–54 (MAVQQNRKTRSRRGMRRSHDALTAAQLSVDSTSGETHRRHHVTADGYYRGKKVI) are disordered. Positions 7 to 16 (RKTRSRRGMR) are enriched in basic residues. The segment covering 25–34 (AQLSVDSTSG) has biased composition (polar residues).

It belongs to the bacterial ribosomal protein bL32 family.

The polypeptide is Large ribosomal subunit protein bL32 (Tolumonas auensis (strain DSM 9187 / NBRC 110442 / TA 4)).